The chain runs to 365 residues: Cobalt-precorrin-5B C(1)-methyltransferase (365 aa).

This sequence belongs to the CbiD family.

It catalyses the reaction Co-precorrin-5B + S-adenosyl-L-methionine = Co-precorrin-6A + S-adenosyl-L-homocysteine. The protein operates within cofactor biosynthesis; adenosylcobalamin biosynthesis; cob(II)yrinate a,c-diamide from sirohydrochlorin (anaerobic route): step 6/10. Functionally, catalyzes the methylation of C-1 in cobalt-precorrin-5B to form cobalt-precorrin-6A. In Paraburkholderia phytofirmans (strain DSM 17436 / LMG 22146 / PsJN) (Burkholderia phytofirmans), this protein is Cobalt-precorrin-5B C(1)-methyltransferase.